The sequence spans 79 residues: Small ribosomal subunit protein uS17 (79 aa).

The protein belongs to the universal ribosomal protein uS17 family. In terms of assembly, part of the 30S ribosomal subunit.

Functionally, one of the primary rRNA binding proteins, it binds specifically to the 5'-end of 16S ribosomal RNA. In Mesorhizobium japonicum (strain LMG 29417 / CECT 9101 / MAFF 303099) (Mesorhizobium loti (strain MAFF 303099)), this protein is Small ribosomal subunit protein uS17.